The following is a 382-amino-acid chain: Fimbrial usher domain-containing protein YdeT (382 aa).

This chain is Fimbrial usher domain-containing protein YdeT (ydeT), found in Escherichia coli (strain K12).